The following is a 126-amino-acid chain: Heterotrimeric G protein gamma subunit GPG1 (126 aa).

G proteins are composed of 3 units, alpha, beta and gamma. GPG1 interacts with the beta subunits GBP1 and GPB2.

Its subcellular location is the cytoplasm. Functionally, gamma subunit of a guanine nucleotide-binding protein (G protein). G proteins are involved as modulators or transducers in various transmembrane signaling systems. The beta and gamma chains are required for the GTPase activity, for replacement of GDP by GTP, and for G protein-effector interaction. Involved in the determination of the cAMP level according to nutritional conditions, most probably as a regulator of cAMP phosphodiesterase. Required for the control of pseudohyphal and haploid invasive growth. The protein is Heterotrimeric G protein gamma subunit GPG1 (GPG1) of Saccharomyces cerevisiae (strain ATCC 204508 / S288c) (Baker's yeast).